The primary structure comprises 600 residues: Glutamine--fructose-6-phosphate aminotransferase [isomerizing] (600 aa).

Cys2 acts as the Nucleophile; for GATase activity in catalysis. The 216-residue stretch at 2–217 (CGIVGFIGEQ…DKEIVIVTKE (216 aa)) folds into the Glutamine amidotransferase type-2 domain. SIS domains lie at 283 to 422 (IRNA…AKGE) and 452 to 590 (LAKQ…VDKP). Lys595 acts as the For Fru-6P isomerization activity in catalysis.

Homodimer.

The protein localises to the cytoplasm. The enzyme catalyses D-fructose 6-phosphate + L-glutamine = D-glucosamine 6-phosphate + L-glutamate. Its function is as follows. Catalyzes the first step in hexosamine metabolism, converting fructose-6P into glucosamine-6P using glutamine as a nitrogen source. The polypeptide is Glutamine--fructose-6-phosphate aminotransferase [isomerizing] (Bacillus cereus (strain ATCC 14579 / DSM 31 / CCUG 7414 / JCM 2152 / NBRC 15305 / NCIMB 9373 / NCTC 2599 / NRRL B-3711)).